The following is a 553-amino-acid chain: Probable bifunctional riboflavin biosynthesis protein RIBA 2, chloroplastic (553 aa).

A chloroplast-targeting transit peptide spans 1–56; the sequence is MASISPTSSSVAALRGHPVQFVKGGAVSKEAKGSISFSPVANSNNANVKFTGLRVA. A DHBP synthase region spans residues 62-336; that stretch reads DGAFPGDGYS…IADLIRYRRK (275 aa). The disordered stretch occupies residues 70-90; sequence YSGNDNTVLPKSTSVRGQDYP. Residues 72-85 are compositionally biased toward polar residues; it reads GNDNTVLPKSTSVR. Residues 160–161, D165, 275–279, and E299 each bind D-ribulose 5-phosphate; these read RE and RAGHT. Residue E161 coordinates Mg(2+). H278 serves as a coordination point for Mg(2+). A GTP cyclohydrolase II region spans residues 337-553; the sequence is RDRLVERSSV…TGSNGAKGEH (217 aa). 387 to 391 is a binding site for GTP; it reads RVHSE. The Zn(2+) site is built by C392, C403, and C405. GTP-binding positions include Q408, 431 to 433, and T453; that span reads EGR. D465 acts as the Proton acceptor; for GTP cyclohydrolase activity in catalysis. The active-site Nucleophile; for GTP cyclohydrolase activity is the R467. GTP-binding residues include T488 and K493.

The protein in the N-terminal section; belongs to the DHBP synthase family. It in the C-terminal section; belongs to the GTP cyclohydrolase II family. It depends on Mg(2+) as a cofactor. Mn(2+) is required as a cofactor. The cofactor is Zn(2+).

It localises to the plastid. It is found in the chloroplast. The enzyme catalyses D-ribulose 5-phosphate = (2S)-2-hydroxy-3-oxobutyl phosphate + formate + H(+). It carries out the reaction GTP + 4 H2O = 2,5-diamino-6-hydroxy-4-(5-phosphoribosylamino)-pyrimidine + formate + 2 phosphate + 3 H(+). The protein operates within cofactor biosynthesis; riboflavin biosynthesis; 2-hydroxy-3-oxobutyl phosphate from D-ribulose 5-phosphate: step 1/1. It functions in the pathway cofactor biosynthesis; riboflavin biosynthesis; 5-amino-6-(D-ribitylamino)uracil from GTP: step 1/4. In terms of biological role, involved in riboflavin biosynthesis. Catalyzes both the conversion of D-ribulose 5-phosphate to formate and 3,4-dihydroxy-2-butanone 4-phosphate and the conversion of GTP to 2,5-diamino-6-ribosylamino-4(3H)-pyrimidinone 5'-phosphate (DARP), formate and pyrophosphate. The sequence is that of Probable bifunctional riboflavin biosynthesis protein RIBA 2, chloroplastic (RIBA2) from Oryza sativa subsp. japonica (Rice).